Reading from the N-terminus, the 463-residue chain is ATP synthase subunit beta (463 aa).

152-159 (GGAGVGKT) serves as a coordination point for ATP.

The protein belongs to the ATPase alpha/beta chains family. F-type ATPases have 2 components, CF(1) - the catalytic core - and CF(0) - the membrane proton channel. CF(1) has five subunits: alpha(3), beta(3), gamma(1), delta(1), epsilon(1). CF(0) has three main subunits: a(1), b(2) and c(9-12). The alpha and beta chains form an alternating ring which encloses part of the gamma chain. CF(1) is attached to CF(0) by a central stalk formed by the gamma and epsilon chains, while a peripheral stalk is formed by the delta and b chains.

It is found in the cell inner membrane. The enzyme catalyses ATP + H2O + 4 H(+)(in) = ADP + phosphate + 5 H(+)(out). In terms of biological role, produces ATP from ADP in the presence of a proton gradient across the membrane. The catalytic sites are hosted primarily by the beta subunits. The chain is ATP synthase subunit beta from Shewanella baltica (strain OS223).